The sequence spans 413 residues: Histidine--tRNA ligase (413 aa).

The protein belongs to the class-II aminoacyl-tRNA synthetase family. As to quaternary structure, homodimer.

The protein localises to the cytoplasm. It catalyses the reaction tRNA(His) + L-histidine + ATP = L-histidyl-tRNA(His) + AMP + diphosphate + H(+). The protein is Histidine--tRNA ligase of Ehrlichia chaffeensis (strain ATCC CRL-10679 / Arkansas).